The following is an 859-amino-acid chain: Cadherin-related family member 1 (859 aa).

Positions 1 to 21 (MRRGPQVALVLGLLCIYLAQA) are cleaved as a signal peptide. Residues 22–701 (NFAPHFFDNG…LIQTKDNPMK (680 aa)) lie on the Extracellular side of the membrane. Cadherin domains follow at residues 36-135 (NGNM…APRF), 136-247 (LQEP…APIF), 248-354 (VGTP…PPTF), 360-473 (PQNK…VPKF), 474-577 (TSHY…YPQF), and 569-691 (DVND…MAAF). Residues Asn58 and Asn89 are each glycosylated (N-linked (GlcNAc...) asparagine). Asn288 and Asn297 each carry an N-linked (GlcNAc...) asparagine glycan. Residues 702-722 (AVGVLAGVMAIVVAITVLIST) traverse the membrane as a helical segment. Residues 723-859 (ATFWRNKKSN…KKSLGNKAYV (137 aa)) lie on the Cytoplasmic side of the membrane. The tract at residues 789-859 (PPRAPALPPP…KKSLGNKAYV (71 aa)) is disordered. Positions 790–800 (PRAPALPPPPK) are enriched in pro residues. The span at 802–816 (ASSTVAQQTVPTVSG) shows a compositional bias: polar residues. Residues 817 to 827 (SLTPQPSQQLP) show a composition bias toward low complexity.

Interacts with PROM1. Post-translationally, undergoes proteolytic cleavage; produces a soluble 95 kDa N-terminal fragment and a 25 kDa cell-associated C-terminal fragment. In terms of tissue distribution, expressed in the retina. Strongly expressed by the mitral and tufted cells in the main and accessory olfactory bulbs. Also expressed in the septum and olfactory cortex. Weakly expressed in the triangular septal nucleus and piriform cortex.

The protein localises to the cell membrane. Its function is as follows. Potential calcium-dependent cell-adhesion protein. May be required for the structural integrity of the outer segment (OS) of photoreceptor cells. The protein is Cadherin-related family member 1 (Cdhr1) of Rattus norvegicus (Rat).